Here is a 683-residue protein sequence, read N- to C-terminus: Acetyl-coenzyme A synthetase 2 (683 aa).

CoA contacts are provided by residues 207-210 (RGGK) and threonine 326. ATP is bound by residues 402–404 (GEP), 426–431 (DTFWQT), aspartate 517, and arginine 532. CoA is bound at residue serine 540. Residue arginine 543 participates in ATP binding. Arginine 613 provides a ligand contact to CoA.

It belongs to the ATP-dependent AMP-binding enzyme family.

It carries out the reaction acetate + ATP + CoA = acetyl-CoA + AMP + diphosphate. In Candida glabrata (strain ATCC 2001 / BCRC 20586 / JCM 3761 / NBRC 0622 / NRRL Y-65 / CBS 138) (Yeast), this protein is Acetyl-coenzyme A synthetase 2 (ACS2).